The primary structure comprises 4493 residues: Mucin-17 (4493 aa).

Positions 1-25 are cleaved as a signal peptide; it reads MPRPGTMALCLLTLVLSLLPPQAAA. Topologically, residues 26-4393 are extracellular; that stretch reads EQDLSVNRAV…QGTQKSLVYG (4368 aa). Polar residues predominate over residues 88–105; the sequence is NPEMTSIESSVTSDTPGV. 4 disordered regions span residues 88 to 159, 188 to 223, 248 to 277, and 306 to 344; these read NPEM…SISS, LTTSTQASSSPTTPESTTIPKSTNSEGSTPLTSMPA, TISAQASSSPTTAEGPSLSNSAPSGGSTPL, and VITSTEASSSPTTAEGTSIPTSTYTEGSTPLTSTPASTM. Low complexity predominate over residues 106–146; that stretch reads SSTRMTPTESRTTSESTSDSTTLFPSSTEDTSSPTTPEGTD. Residues 148 to 159 show a composition bias toward polar residues; sequence PMSTPSEESISS. 57 repeat units span residues 185–245, 246–300, 301–361, 362–418, 420–477, 479–538, 539–597, 598–654, 656–715, 716–774, 775–831, 833–892, 893–951, 952–1010, 1011–1069, 1070–1121, 1122–1187, 1188–1246, 1247–1305, 1306–1364, 1365–1423, 1424–1482, 1483–1541, 1542–1600, 1601–1656, 1658–1717, 1718–1776, 1777–1835, 1836–1895, 1896–1951, 1953–2012, 2013–2071, 2072–2127, 2129–2188, 2189–2247, 2248–2306, 2307–2365, 2366–2424, 2425–2483, 2484–2540, 2542–2601, 2602–2653, 2654–2719, 2720–2770, 2772–2837, 2838–2896, 2897–2955, 2956–3014, 3015–3073, 3074–3132, 3133–3191, 3192–3247, 3249–3308, 3309–3367, 3368–3426, 3427–3485, and 3486–3544. Positions 185–3727 are 59 X approximate tandem repeats; sequence STPLTTSTQA…SVVTSTPVTT (3543 aa). Positions 188–210 are enriched in low complexity; that stretch reads LTTSTQASSSPTTPESTTIPKST. Residues 211–223 show a composition bias toward polar residues; the sequence is NSEGSTPLTSMPA. Low complexity predominate over residues 308–323; that stretch reads TSTEASSSPTTAEGTS. Residues 324–344 show a composition bias toward polar residues; the sequence is IPTSTYTEGSTPLTSTPASTM. Low complexity predominate over residues 425–441; it reads TTASEASSSPTTAEDTS. Disordered stretches follow at residues 425–629, 644–868, 886–1104, 1116–1163, 1175–1279, and 1296–1338; these read TTAS…ERGT, SEAS…TPLT, STTP…TPLT, SEAS…TPLA, SEAN…GSTL, and STLL…GRTP. Polar residues predominate over residues 442–483; the sequence is IATSTPSEGSTPLTSMPVSTTPVASSEASNLSTTPVDSKTQV. N-linked (GlcNAc...) asparagine glycosylation occurs at Asn-471. The segment covering 484-497 has biased composition (low complexity); that stretch reads TTSTEASSSPPTAE. The span at 498 to 528 shows a compositional bias: polar residues; that stretch reads VNSMPTSTPSEGSTPLTSMSVSTMPVASSEA. Low complexity-rich tracts occupy residues 529 to 573 and 584 to 618; these read STLS…TPLT and SSEASTTSTTPADSNTFVTTSSEASSSSTTAEGTS. Polar residues-rich tracts occupy residues 619-629 and 644-660; these read MPTSTYSERGT and SEASTLSTTPVDSNTPV. The span at 661-677 shows a compositional bias: low complexity; sequence TTSTEATSSSTTAEGTS. The span at 678–705 shows a compositional bias: polar residues; sequence MPTSTYTEGSTPLTSMPVNTTLVASSEA. An N-linked (GlcNAc...) asparagine glycan is attached at Asn-696. Residues 706–733 show a composition bias toward low complexity; the sequence is STLSTTPVDTSTPVTTSTEASSSPTTAD. A compositionally biased stretch (polar residues) spans 737–754; it reads MPTSTPSEGSTPLTSMPV. The span at 755-776 shows a compositional bias: low complexity; sequence SKTLLTSSEASTLSTTPLDTST. A compositionally biased stretch (polar residues) spans 777-832; that stretch reads HITTSTEASCSPTTTEGTSMPISTPSEGSPLLTSIPVSITPVTSPEASTLSTTPVD. A compositionally biased stretch (low complexity) spans 833 to 849; sequence SNSPVTTSTEVSSSPTP. Polar residues predominate over residues 854-868; the sequence is SMPTSTYSEGRTPLT. The segment covering 886–900 has biased composition (low complexity); that stretch reads STTPVDTSTPVTNST. N-linked (GlcNAc...) asparagine glycosylation occurs at Asn-898. Positions 901–944 are enriched in polar residues; sequence EARSSPTTSEGTSMPTSTPGEGSTPLTSMPDSTTPVVSSEARTL. Residues 945–972 show a composition bias toward low complexity; the sequence is SATPVDTSTPVTTSTEATSSPTTAEGTS. A compositionally biased stretch (polar residues) spans 973-1011; the sequence is IPTSTPSEGTTPLTSTPVSHTLVANSEASTLSTTPVDSN. Residues 1012-1021 are compositionally biased toward low complexity; sequence TPLTTSTEAS. Positions 1029–1062 are enriched in polar residues; it reads GTSMPTSTPSEGSTPLTRMPVSTTMVASSETSTL. Over residues 1063-1090 the composition is skewed to low complexity; it reads STTPADTSTPVTTYSQASSSSTTADGTS. Polar residues-rich tracts occupy residues 1091–1104 and 1116–1132; these read MPTSTYSEGSTPLT and SEASTLSTTPVDTSIPV. Residues 1133–1149 are compositionally biased toward low complexity; that stretch reads TTSTEASSSPTTAEGTS. 2 stretches are compositionally biased toward polar residues: residues 1175 to 1198 and 1205 to 1222; these read SEANTLSTTPVDSKTQVATSTEAS and EVTSMPTSTPGERSTPLT. Residues 1237 to 1279 show a composition bias toward low complexity; that stretch reads STLSTSPVDTSTPVTTSAETSSSPTTAEGTSLPTSTTSEGSTL. 2 stretches are compositionally biased toward polar residues: residues 1310–1320 and 1326–1338; these read VTSNEVSSSPT and SMPTSTYSEGRTP. N-linked (GlcNAc...) asparagine glycosylation is present at Asn-1345. Positions 1360 to 1394 are enriched in polar residues; the sequence is TPVDNSTPVTTSTEACSSPTTSEGTSMPNSNPSEG. Disordered stretches follow at residues 1360–1516, 1537–1575, 1590–1930, 1947–2163, 2177–2281, 2295–2501, 2524–2630, 2647–2693, 2709–2751, 2765–2853, 2879–2925, 2942–3167, 3182–3577, 3589–3635, 3667–3701, 3785–3812, 3829–3849, 3892–3914, 3965–3988, and 4008–4129; these read TPVD…STAL, TPAVTSTPVTTYSQASSSPTTADGTSMQTSTYSEGSTPL, ANTL…PLTS, STTL…RTPL, AIST…TTPL, EVST…TTAE, TTPV…TPSE, SSEA…RSTP, ASTL…DGST, SSEA…SPTT, TPVA…TPSE, GSEA…TPLT, STLS…GSSS, TSSE…EVST, ITSTQVSSSPVTPEGTTMPIWTPSEGSTPLTTMPV, MTTASEGSSSPTTLEGTTTMPMSTTSER, PSEASTLSTPPGDTSTPLLTS, ASIASTPPLDTSTTFTPSTDTAS, VITSTELNTPSTSSSSTTTSFSTT, and STAP…TPTV. Low complexity-rich tracts occupy residues 1395-1415 and 1423-1442; these read TTPLTSIPVSTTPVVSSEAST and TSTPGTTSAEATSSPTTAEG. Polar residues predominate over residues 1461–1483; sequence PVSNTPVANSEASTLSTTPVDSN. The segment covering 1484 to 1499 has biased composition (low complexity); it reads SPVVTSTAVSSSPTPA. Residues 1504–1516 are compositionally biased toward polar residues; sequence IAISTPSEGSTAL. Low complexity predominate over residues 1537 to 1547; the sequence is TPAVTSTPVTT. Composition is skewed to polar residues over residues 1548–1575 and 1590–1604; these read YSQASSSPTTADGTSMQTSTYSEGSTPL and ANTLSTTPIDSKTQV. Over residues 1605-1620 the composition is skewed to low complexity; that stretch reads TASTEASSSTTAEGSS. 2 stretches are compositionally biased toward polar residues: residues 1621-1673 and 1679-1775; these read MTIS…SSPT and SMPT…TPID. The segment covering 1776-1797 has biased composition (low complexity); sequence TSTPVTTSTEATSSPTTAEGTS. The span at 1798–1836 shows a compositional bias: polar residues; that stretch reads IPTSTLSEGMTPLTSTPVSHTLVANSEASTLSTTPVDSN. The span at 1837-1852 shows a compositional bias: low complexity; it reads SPVVTSTAVSSSPTPA. Polar residues predominate over residues 1856–1883; the sequence is SIATSTPSEGSTALTSIPVSTTTVASSE. The segment covering 1884–1900 has biased composition (low complexity); the sequence is TNTLSTTPAVTSTPVTT. Composition is skewed to polar residues over residues 1901 to 1921 and 1947 to 1976; these read YAQVSSSPTTADGSSMPTSTP and STTLADTRTPVTTYSQASSSPTTADGTSMP. Residues 1984-2033 are compositionally biased toward low complexity; sequence STPLTSMPLSTTLVVSSEASTLSTTPVDTSTPATTSTEGSSSPTTAGGTS. 2 stretches are compositionally biased toward polar residues: residues 2034–2043 and 2051–2077; these read IQTSTPSERT and VSTTLVVSSEGNTLSTTPVDSKTQVTN. Residue Asn-2077 is glycosylated (N-linked (GlcNAc...) asparagine). The segment covering 2078–2091 has biased composition (low complexity); sequence STEASSSATAEGSS. The span at 2092 to 2156 shows a compositional bias: polar residues; the sequence is MTISAPSEGS…EGTSMQTSTY (65 aa). The span at 2177–2196 shows a compositional bias: low complexity; sequence AISTLSTTPVDTSTPVTNST. Asn-2194 carries N-linked (GlcNAc...) asparagine glycosylation. The segment covering 2197 to 2240 has biased composition (polar residues); sequence EARSSPTTSEGTSMPTSTPSEGSTPFTSMPVSTMPVVTSEASTL. The span at 2241–2268 shows a compositional bias: low complexity; that stretch reads SATPVDTSTPVTTSTEATSSPTTAEGTS. Polar residues-rich tracts occupy residues 2269–2281 and 2295–2307; these read IPTSTLSEGTTPL and EVSTLSTTPVDSN. The segment covering 2308 to 2317 has biased composition (low complexity); sequence TPFTTSTEAS. The segment covering 2325-2358 has biased composition (polar residues); sequence GTSMPTSTSSEGNTPLTRMPVSTTMVASFETSTL. Low complexity predominate over residues 2359–2371; the sequence is STTPADTSTPVTT. Over residues 2372–2395 the composition is skewed to polar residues; it reads YSQAGSSPTTADDTSMPTSTYSEG. Low complexity-rich tracts occupy residues 2396 to 2445 and 2462 to 2499; these read STPL…EGTS and PVSTTPVVSSEAGTLSTTPVDTSTPMTTSTEASSSPTT. Residues 2524 to 2547 show a composition bias toward polar residues; that stretch reads TTPVASPEASTLSTTPVDSNSPVV. A compositionally biased stretch (low complexity) spans 2548-2563; the sequence is TSTEISSSATSAEGTS. Over residues 2564–2576 the composition is skewed to polar residues; it reads MPTSTYSEGSTPL. The span at 2586–2617 shows a compositional bias: low complexity; that stretch reads LASSEASTLSTTPVDTSIPVTTSTETSSSPTT. Positions 2618 to 2628 are enriched in polar residues; the sequence is AKDTSMPISTP. Over residues 2654–2681 the composition is skewed to low complexity; the sequence is STTPVDTRTLVTTSTGTSSSPTTAEGSS. The span at 2682 to 2693 shows a compositional bias: polar residues; the sequence is MPTSTPGERSTP. The span at 2710 to 2740 shows a compositional bias: low complexity; it reads STLSTTPVDTSTPVTTSAEASSSPTTAEGTS. The span at 2741–2751 shows a compositional bias: polar residues; sequence MRISTPSDGST. Composition is skewed to low complexity over residues 2765–2816 and 2829–2853; these read SSEA…TSMP and TLSTTPVDTSTPVTTSTKASSSPTT. Over residues 2879–2900 the composition is skewed to polar residues; sequence TPVASSEASTLSTTPVDTSIPV. Composition is skewed to low complexity over residues 2901–2917 and 2950–2976; these read TTSTEGSSSPTTAEGTS and TTPVDTRTPVTTSAEASSSPTTAEGTS. Polar residues predominate over residues 2988–3009; it reads PLTSMSVSTMPVASSEASTLSR. Over residues 3010-3031 the composition is skewed to low complexity; that stretch reads TPADTSTPVTTSTEASSSPTTA. Over residues 3037 to 3057 the composition is skewed to polar residues; sequence PISTPSEGSTPLTSIPVSTTP. Low complexity-rich tracts occupy residues 3073–3089 and 3104–3140; these read SNSPVVTSTEVSSSPTP and STPLTGVPVSTTPVTSSAISTLSTTPVDTSTPVTTST. Positions 3141 to 3166 are enriched in polar residues; that stretch reads EAHSSPTTSEGTSMPTSTPSEGSTPL. Over residues 3185 to 3211 the composition is skewed to low complexity; sequence SATPVDTSTPVTTSTEATSSTTAEGTS. The segment covering 3212–3253 has biased composition (polar residues); the sequence is IPTSTPSEGMTPLTSVPVSNTPVASSEASILSTTPVDSNTPL. The segment covering 3254-3267 has biased composition (low complexity); it reads TTSTEASSSPPTAE. Over residues 3268-3288 the composition is skewed to polar residues; the sequence is GTSMPTSTPSEGSTPLTSMPV. The span at 3289-3314 shows a compositional bias: low complexity; the sequence is STTTVASSETSTLSTTPADTSTPVTT. Polar residues predominate over residues 3329-3357; it reads SMPTSTYSEGSTPLTNMSFSTTPVVSSEA. A glycan (N-linked (GlcNAc...) asparagine) is linked at Asn-3344. Residues 3358-3375 show a composition bias toward low complexity; it reads STLSTTPVDTSTPVTTST. Over residues 3376-3401 the composition is skewed to polar residues; the sequence is EASLSPTTAEGTSIPTSSPSEGTTPL. Over residues 3405 to 3414 the composition is skewed to low complexity; that stretch reads PVSTTPVVSS. 2 stretches are compositionally biased toward polar residues: residues 3415-3441 and 3447-3475; these read EVNTLSTTPVDSNTLVTTSTEASSSPT and SLPTSTTSEGSTPLSIMPLSTTPVASSEA. The segment covering 3476 to 3501 has biased composition (low complexity); that stretch reads STLSTTPVDTSTPVTTSSPTNSSPTT. Polar residues-rich tracts occupy residues 3502–3549 and 3558–3571; these read AEVT…TFVT and PATLQVTTMRMSTP. Low complexity predominate over residues 3589–3616; the sequence is TSSEASTPSTPSVDRSTPVTTSTQSNST. Tandem repeats lie at residues 3604-3662 and 3663-3727. A compositionally biased stretch (polar residues) spans 3626–3635; sequence PMSTPSEVST. A compositionally biased stretch (low complexity) spans 3667 to 3679; the sequence is ITSTQVSSSPVTP. Polar residues-rich tracts occupy residues 3690-3701 and 3785-3806; these read SEGSTPLTTMPV and MTTASEGSSSPTTLEGTTTMPM. 3 stretches are compositionally biased toward low complexity: residues 3967–3988, 4008–4083, and 4090–4129; these read TSTELNTPSTSSSSTTTSFSTT, STAP…SSTT, and TTMTTRTKPSTRTTSFPTVTTTAVPTNTTIKSNPTSTPTV. Asn-4116 is a glycosylation site (N-linked (GlcNAc...) asparagine). The 40-residue stretch at 4131-4170 folds into the EGF-like domain; it reads RTTTCFGDGCQNTASRCKNGGTWDGLKCQCPNLYYGELCE. 3 disulfides stabilise this stretch: Cys-4135–Cys-4147, Cys-4140–Cys-4158, and Cys-4160–Cys-4169. The 108-residue stretch at 4184 to 4291 folds into the SEA domain; that stretch reads ISAQMELTVT…QQIMINDICS (108 aa). N-linked (GlcNAc...) asparagine glycosylation is found at Asn-4205, Asn-4236, Asn-4267, Asn-4297, and Asn-4305. The chain crosses the membrane as a helical span at residues 4394 to 4414; that stretch reads LVGAGVVLMLIILVALLMLVF. Over 4415–4493 the chain is Cytoplasmic; that stretch reads RSKREVKRQK…QRPQVMTTSF (79 aa).

In terms of assembly, interacts via its C-terminus with PDZK1 and this interaction appears important for proper localization. Post-translationally, probably cleaved within the SEA domain. N-glycosylated. Contains high mannose and complex-type glycans. The forms containing the complex type glycans localize to the cell surface. Not O-glycosylated. In terms of tissue distribution, expressed almost exclusively in the intestine. Expression is especially high in both the duodenum and transverse colon. Expressed in mature absorptive cells of the small intestinal villi. No expression is detected in goblet cells. Highly expressed in pancreatic adenocarcinoma tissue (at protein level). Expression is not detectable in normal pancreas, in pancreatitis or in cell lines derived from other cancers.

The protein localises to the cell membrane. It is found in the secreted. Probably plays a role in maintaining homeostasis on mucosal surfaces. The polypeptide is Mucin-17 (MUC17) (Homo sapiens (Human)).